The primary structure comprises 172 residues: Protein LOL2 (172 aa).

Putative zinc finger stretches follow at residues 4-34 (QIVCHGCRNILLYPRGAPSVCCAVCHAVSST), 44-74 (HLICGGCRTLLMYTRNATSVRCSCCDTVNLV), and 82-112 (HLNCGQCQTVLMYPYGAPSVKCAICNFITNT).

It localises to the nucleus. Putative zinc finger that may be involved in programmed cell death and defense response. In Oryza sativa subsp. japonica (Rice), this protein is Protein LOL2 (LOL2).